A 285-amino-acid polypeptide reads, in one-letter code: Heme oxygenase 3, chloroplastic (285 aa).

The transit peptide at Met1 to Thr58 directs the protein to the chloroplast. Position 89 (His89) interacts with heme b. A compositionally biased stretch (basic and acidic residues) spans His89–Glu105. The segment at His89–Val109 is disordered.

This sequence belongs to the heme oxygenase family. Widely expressed at low levels.

The protein localises to the plastid. It localises to the chloroplast. The catalysed reaction is heme b + 3 reduced [NADPH--hemoprotein reductase] + 3 O2 = biliverdin IXalpha + CO + Fe(2+) + 3 oxidized [NADPH--hemoprotein reductase] + 3 H2O + H(+). Its function is as follows. Catalyzes the opening of the heme ring to form the open-chain tetrapyrrole biliverdin IX with the release of iron and carbon monoxide (CO). Produces specifically the biliverdin IX-alpha isomer. Plays a minor role in phytochrome assembly and photomorphogenesis. This Arabidopsis thaliana (Mouse-ear cress) protein is Heme oxygenase 3, chloroplastic (HO3).